We begin with the raw amino-acid sequence, 469 residues long: Cysteine--tRNA ligase (469 aa).

Zn(2+) is bound at residue cysteine 33. Residues 35–45 (ATVQGLPHIGH) carry the 'HIGH' region motif. Residues cysteine 211, histidine 236, and glutamate 240 each contribute to the Zn(2+) site. The 'KMSKS' region motif lies at 267 to 271 (KMSKS). ATP is bound at residue lysine 270.

Belongs to the class-I aminoacyl-tRNA synthetase family. Monomer. Requires Zn(2+) as cofactor.

The protein resides in the cytoplasm. The catalysed reaction is tRNA(Cys) + L-cysteine + ATP = L-cysteinyl-tRNA(Cys) + AMP + diphosphate. The polypeptide is Cysteine--tRNA ligase (cysS) (Mycobacterium bovis (strain ATCC BAA-935 / AF2122/97)).